Consider the following 138-residue polypeptide: Small ribosomal subunit protein uS11c (138 aa).

Positions 1-22 (MAKPILRIGSRKNTRSGSRKNV) are disordered. The span at 9-22 (GSRKNTRSGSRKNV) shows a compositional bias: basic residues.

The protein belongs to the universal ribosomal protein uS11 family. In terms of assembly, part of the 30S ribosomal subunit.

It is found in the plastid. Its subcellular location is the chloroplast. The polypeptide is Small ribosomal subunit protein uS11c (Arabis hirsuta (Hairy rock-cress)).